The sequence spans 471 residues: Anthranilate 1,2-dioxygenase large subunit (471 aa).

The Rieske domain maps to 52 to 160; that stretch reads IYACHESEIP…IASYRGFVFV (109 aa). [2Fe-2S] cluster contacts are provided by cysteine 93, histidine 95, cysteine 113, and histidine 116. Positions 220, 225, and 379 each coordinate Fe cation.

This sequence belongs to the bacterial ring-hydroxylating dioxygenase alpha subunit family. In terms of assembly, the anthranilate dioxygenase (AntDO) multicomponent enzyme system is composed of an oxygenase component and a NADH:acceptor reductase component (AntC). The oxygenase component is a heterohexamer of 3 large (AntA) and 3 small (AntB) subunits. Fe cation is required as a cofactor. The cofactor is [2Fe-2S] cluster.

The enzyme catalyses anthranilate + NADH + O2 + 3 H(+) = catechol + NH4(+) + CO2 + NAD(+). It catalyses the reaction anthranilate + NADPH + O2 + 3 H(+) = catechol + NH4(+) + CO2 + NADP(+). Its pathway is aromatic compound metabolism; anthranilate degradation via hydroxylation; catechol from anthranilate: step 1/1. In terms of biological role, component of anthranilate dioxygenase multicomponent enzyme system which catalyzes the incorporation of both atoms of molecular oxygen into anthranilate to form catechol. The protein is Anthranilate 1,2-dioxygenase large subunit of Acinetobacter baylyi (strain ATCC 33305 / BD413 / ADP1).